The sequence spans 837 residues: A disintegrin and metalloproteinase with thrombospondin motifs 4 (837 aa).

The first 51 residues, 1–51 (MSQTGSHPGRGLAGRWLWGAQPCLLLPIVPLSWLVWLLLLLLASLLPSARL), serve as a signal peptide directing secretion. The propeptide occupies 52 to 212 (ASPLPREEEI…PSPRPRRAKR (161 aa)). N-linked (GlcNAc...) asparagine glycosylation is present at Asn-68. A Cysteine switch motif is present at residues 192-199 (PMCNVKAP). Residue Cys-194 participates in Zn(2+) binding. One can recognise a Peptidase M12B domain in the interval 218 to 428 (RFVETLVVAD…GYGHCLLDKP (211 aa)). Disulfide bonds link Cys-293–Cys-345, Cys-322–Cys-327, Cys-339–Cys-423, Cys-377–Cys-407, Cys-449–Cys-472, Cys-460–Cys-482, Cys-467–Cys-501, Cys-495–Cys-506, Cys-532–Cys-569, Cys-536–Cys-574, and Cys-547–Cys-559. His-361 is a Zn(2+) binding site. Residue Glu-362 is part of the active site. His-365 and His-371 together coordinate Zn(2+). The region spanning 437–519 (TFPGKDYDAD…DQLQDFNIPQ (83 aa)) is the Disintegrin domain. In terms of domain architecture, TSP type-1 spans 520–575 (AGGWGPWGPWGDCSRTCGGGVQFSSRDCTRPVPRNGGKYCEGRRTRFRSCNTEDCP). Residues 686–837 (SKQSGSFRKF…LRRRPWAGRK (152 aa)) form a spacer region.

As to quaternary structure, interacts with SRPX2. Zn(2+) serves as cofactor. Post-translationally, the precursor is cleaved by a furin endopeptidase. Glycosylated. Can be O-fucosylated by POFUT2 on a serine or a threonine residue found within the consensus sequence C1-X(2)-(S/T)-C2-G of the TSP type-1 repeat domains where C1 and C2 are the first and second cysteine residue of the repeat, respectively. Fucosylated repeats can then be further glycosylated by the addition of a beta-1,3-glucose residue by the glucosyltransferase, B3GALTL. Fucosylation mediates the efficient secretion of ADAMTS family members. Can also be C-glycosylated with one or two mannose molecules on tryptophan residues within the consensus sequence W-X-X-W of the TPRs, and N-glycosylated. These other glycosylations can also facilitate secretion. As to expression, expressed in brain, lung and heart. Expressed at very low level in placenta and skeletal muscles. Isoform 2: Detected in osteoarthritic synovium.

The protein resides in the secreted. The protein localises to the extracellular space. It is found in the extracellular matrix. It carries out the reaction Glutamyl endopeptidase. Bonds cleaved include 370-Thr-Glu-Gly-Glu-|-Ala-Arg-Gly-Ser-377 in the interglobular domain of mammalian aggrecan.. In terms of biological role, cleaves aggrecan, a cartilage proteoglycan, at the '392-Glu-|-Ala-393' site and may be involved in its turnover. Also cleaves COMP. May play an important role in the destruction of aggrecan in arthritic diseases. Could be a critical factor in the exacerbation of neurodegeneration in Alzheimer disease. This Homo sapiens (Human) protein is A disintegrin and metalloproteinase with thrombospondin motifs 4 (ADAMTS4).